Here is a 413-residue protein sequence, read N- to C-terminus: Histidine--tRNA ligase (413 aa).

Belongs to the class-II aminoacyl-tRNA synthetase family. As to quaternary structure, homodimer.

Its subcellular location is the cytoplasm. The catalysed reaction is tRNA(His) + L-histidine + ATP = L-histidyl-tRNA(His) + AMP + diphosphate + H(+). In Geobacter sulfurreducens (strain ATCC 51573 / DSM 12127 / PCA), this protein is Histidine--tRNA ligase.